We begin with the raw amino-acid sequence, 833 residues long: Bifunctional dethiobiotin synthetase/7,8-diamino-pelargonic acid aminotransferase, mitochondrial (833 aa).

The N-terminal 23 residues, 1–23, are a transit peptide targeting the mitochondrion; sequence MIPVTATLIRHRLRHLRHRIRFK. The dethiobiotin synthetase stretch occupies residues 36-299; that stretch reads HPTYLIWSAN…VLVLPPVPKD (264 aa). Position 47–52 (47–52) interacts with ATP; sequence SLGKTL. T51 lines the Mg(2+) pocket. T81 serves as a coordination point for substrate. Mg(2+) is bound at residue D88. Residues D97, 210-213, and 270-271 contribute to the ATP site; these read ETAG and ED. E210 is a Mg(2+) binding site. The segment at 332–830 is 7,8-diamino-pelargonic acid aminotransferase; that stretch reads RLNGMAKLAG…TKLYKRLGEF (499 aa). A (8S)-8-amino-7-oxononanoate-binding site is contributed by 391 to 392; that stretch reads WW. 453 to 454 contacts pyridoxal 5'-phosphate; sequence GS. Y495 is a (8S)-8-amino-7-oxononanoate binding site. Residues 518 to 520 and E545 contribute to the ATP site; that span reads PWY. D637 is a binding site for pyridoxal 5'-phosphate. Residues K666 and G700 each contribute to the (8S)-8-amino-7-oxononanoate site. N6-(pyridoxal phosphate)lysine is present on K666. 701–702 is a binding site for pyridoxal 5'-phosphate; the sequence is HS. A (8S)-8-amino-7-oxononanoate-binding site is contributed by R797.

In the N-terminal section; belongs to the dethiobiotin synthetase family. It in the C-terminal section; belongs to the class-III pyridoxal-phosphate-dependent aminotransferase family. BioA subfamily. In terms of assembly, homodimer. Mg(2+) serves as cofactor. It depends on pyridoxal 5'-phosphate as a cofactor.

The protein resides in the mitochondrion matrix. The catalysed reaction is (7R,8S)-7,8-diammoniononanoate + CO2 + ATP = (4R,5S)-dethiobiotin + ADP + phosphate + 3 H(+). It catalyses the reaction (8S)-8-amino-7-oxononanoate + S-adenosyl-L-methionine = S-adenosyl-4-methylsulfanyl-2-oxobutanoate + (7R,8S)-7,8-diammoniononanoate. The protein operates within cofactor biosynthesis; biotin biosynthesis; biotin from 7,8-diaminononanoate: step 1/2. It functions in the pathway cofactor biosynthesis; biotin biosynthesis; 7,8-diaminononanoate from 8-amino-7-oxononanoate (SAM route): step 1/1. Bifunctional enzyme that catalyzes two different reactions involved in the biotin biosynthesis. Its function is as follows. Catalyzes a mechanistically unusual reaction, the ATP-dependent insertion of CO2 between the N7 and N8 nitrogen atoms of 7,8-diaminopelargonic acid (DAPA) to form an ureido ring. In terms of biological role, catalyzes the transfer of the alpha-amino group from S-adenosyl-L-methionine (SAM) to 7-keto-8-aminopelargonic acid (KAPA) to form 7,8-diaminopelargonic acid (DAPA). It is the only aminotransferase known to utilize SAM as an amino donor. The chain is Bifunctional dethiobiotin synthetase/7,8-diamino-pelargonic acid aminotransferase, mitochondrial from Arabidopsis thaliana (Mouse-ear cress).